The sequence spans 337 residues: DNA-directed RNA polymerase subunit alpha (337 aa).

The segment at 1–233 (MVREEVVGST…DLFIPFLHAE (233 aa)) is alpha N-terminal domain (alpha-NTD). The tract at residues 265–337 (KEIALKCIFI…FAIDLPKNKF (73 aa)) is alpha C-terminal domain (alpha-CTD).

The protein belongs to the RNA polymerase alpha chain family. As to quaternary structure, in plastids the minimal PEP RNA polymerase catalytic core is composed of four subunits: alpha, beta, beta', and beta''. When a (nuclear-encoded) sigma factor is associated with the core the holoenzyme is formed, which can initiate transcription.

Its subcellular location is the plastid. It localises to the chloroplast. It catalyses the reaction RNA(n) + a ribonucleoside 5'-triphosphate = RNA(n+1) + diphosphate. Functionally, DNA-dependent RNA polymerase catalyzes the transcription of DNA into RNA using the four ribonucleoside triphosphates as substrates. The protein is DNA-directed RNA polymerase subunit alpha of Acorus calamus (Sweet flag).